Here is a 163-residue protein sequence, read N- to C-terminus: ATP synthase subunit b (163 aa).

A propeptide spanning residues 1 to 11 (MLWKANVWVLG) is cleaved from the precursor. The chain crosses the membrane as a helical span at residues 16-36 (GISGGTIIYQLLMFIILLALL).

Belongs to the ATPase B chain family. F-type ATPases have 2 components, F(1) - the catalytic core - and F(0) - the membrane proton channel. F(1) has five subunits: alpha(3), beta(3), gamma(1), delta(1), epsilon(1). F(0) has three main subunits: a(1), b(2) and c(10-14). The alpha and beta chains form an alternating ring which encloses part of the gamma chain. F(1) is attached to F(0) by a central stalk formed by the gamma and epsilon chains, while a peripheral stalk is formed by the delta and b chains.

The protein localises to the cell membrane. F(1)F(0) ATP synthase produces ATP from ADP in the presence of a proton or sodium gradient. F-type ATPases consist of two structural domains, F(1) containing the extramembraneous catalytic core and F(0) containing the membrane proton channel, linked together by a central stalk and a peripheral stalk. During catalysis, ATP synthesis in the catalytic domain of F(1) is coupled via a rotary mechanism of the central stalk subunits to proton translocation. In terms of biological role, component of the F(0) channel, it forms part of the peripheral stalk, linking F(1) to F(0). The sequence is that of ATP synthase subunit b from Bacillus sp. (strain PS3).